The sequence spans 104 residues: 2,4-dinitrotoluene dioxygenase system, ferredoxin component (104 aa).

The disordered stretch occupies residues 1 to 21; sequence MSENWIDAAARDEVPRGRRDR. Positions 5 to 101 constitute a Rieske domain; sequence WIDAAARDEV…VKIENMRVML (97 aa). [2Fe-2S] cluster contacts are provided by cysteine 45, histidine 47, cysteine 64, and histidine 67.

It belongs to the bacterial ring-hydroxylating dioxygenase ferredoxin component family. The 2,4-dinitrotoluene dioxygenase (DNTDO) multicomponent enzyme system is composed of an electron transfer component and a dioxygenase component (iron sulfur protein (ISP)). The electron transfer component is composed of a ferredoxin reductase (DntAa) and a ferredoxin (DntAb), and the dioxygenase component is formed of a large alpha subunit (DntAc) and a small beta subunit (DntAd). It depends on [2Fe-2S] cluster as a cofactor.

Its function is as follows. Component of the 2,4-dinitrotoluene dioxygenase (DNTDO) multicomponent enzyme system which catalyzes the incorporation of both atoms of molecular oxygen into 2,4-dinitrotoluene (DNT) to form 4-methyl-5-nitrocatechol (MNC) and nitrite. Functions as an intermediate electron transfer protein via a specific interaction with iron sulfur protein components (ISP)(DntAc and DntAd). Also able to convert naphthalene to cis-(1R,2S)-dihydroxy-1,2-dihydronaphthalene. The chain is 2,4-dinitrotoluene dioxygenase system, ferredoxin component from Burkholderia sp. (strain RASC).